The primary structure comprises 382 residues: MSLVVMATGGTGGHIYPAVATARELNARGHETLLLGQRGGMEERVAAEQGLSFEGVDAGKLARSGQGRPDPRELFRAVRGVVEARRVLQARRPALVVGYGGFASLPGVLAAQSLGIATVLHEQNARLGLTQRVAVGRARAVGTAYEQVLGLPAGEGTLVGMPVREERLSREEAQRRLGLHSGPLTVFVMGGSQGSLFLNNSVPDTLRNILGKEGLLSGLGSEAGQIDLDFTHPRAGGAAVQVLHSTGPRWLADVAPRVHDLEWYHAVGYVDTVAAWAAADLAITRAGTGTLAEAAFHGVPLVMVPLPESSENHQYHNALSVQQAGAGRVVEQKNVQEALGAAVLECAEPGTRMAMRDAALARAQIGAAARFADLIEQHLPRS.

UDP-N-acetyl-alpha-D-glucosamine contacts are provided by residues 11–13 (TGG), Asn-124, Arg-164, Ser-192, and Gln-314.

It belongs to the glycosyltransferase 28 family. MurG subfamily.

It localises to the cell membrane. It catalyses the reaction di-trans,octa-cis-undecaprenyl diphospho-N-acetyl-alpha-D-muramoyl-L-alanyl-D-glutamyl-meso-2,6-diaminopimeloyl-D-alanyl-D-alanine + UDP-N-acetyl-alpha-D-glucosamine = di-trans,octa-cis-undecaprenyl diphospho-[N-acetyl-alpha-D-glucosaminyl-(1-&gt;4)]-N-acetyl-alpha-D-muramoyl-L-alanyl-D-glutamyl-meso-2,6-diaminopimeloyl-D-alanyl-D-alanine + UDP + H(+). It participates in cell wall biogenesis; peptidoglycan biosynthesis. Its function is as follows. Cell wall formation. Catalyzes the transfer of a GlcNAc subunit on undecaprenyl-pyrophosphoryl-MurNAc-pentapeptide (lipid intermediate I) to form undecaprenyl-pyrophosphoryl-MurNAc-(pentapeptide)GlcNAc (lipid intermediate II). The chain is UDP-N-acetylglucosamine--N-acetylmuramyl-(pentapeptide) pyrophosphoryl-undecaprenol N-acetylglucosamine transferase from Deinococcus deserti (strain DSM 17065 / CIP 109153 / LMG 22923 / VCD115).